Consider the following 270-residue polypeptide: tRNA pseudouridine synthase A (270 aa).

The Nucleophile role is filled by Asp-60. The RNA binding stretch occupies residues 107 to 111 (FHARF). Residue Tyr-118 participates in substrate binding. The interval 168 to 172 (QCQSR) is interaction with tRNA.

It belongs to the tRNA pseudouridine synthase TruA family. In terms of assembly, homodimer.

It carries out the reaction uridine(38/39/40) in tRNA = pseudouridine(38/39/40) in tRNA. Formation of pseudouridine at positions 38, 39 and 40 in the anticodon stem and loop of transfer RNAs. In Escherichia coli O139:H28 (strain E24377A / ETEC), this protein is tRNA pseudouridine synthase A.